Here is a 354-residue protein sequence, read N- to C-terminus: Glutamine synthetase cytosolic isozyme 1-3 (354 aa).

Serine 2 carries the N-acetylserine modification. Serine 2 and serine 48 each carry phosphoserine. Positions 19–99 (IIAEYIWIGG…VMCDAYTPAG (81 aa)) constitute a GS beta-grasp domain. A GS catalytic domain is found at 106–354 (KRHNAAKIFS…SMIAETTILG (249 aa)).

The protein belongs to the glutamine synthetase family. In terms of assembly, homooctamer. Expressed in the pericycle in the region of mature root.

It localises to the cytoplasm. It carries out the reaction L-glutamate + NH4(+) + ATP = L-glutamine + ADP + phosphate + H(+). Functionally, low-affinity glutamine synthetase. May contribute to the homeostatic control of glutamine synthesis in roots. The chain is Glutamine synthetase cytosolic isozyme 1-3 (GLN1-3) from Arabidopsis thaliana (Mouse-ear cress).